Reading from the N-terminus, the 218-residue chain is uncharacterized protein (218 aa).

An ACT domain is found at 4-83 (GISIEAENKV…IHSSLKKIYG (80 aa)).

This is an uncharacterized protein from Methanocaldococcus jannaschii (strain ATCC 43067 / DSM 2661 / JAL-1 / JCM 10045 / NBRC 100440) (Methanococcus jannaschii).